Here is a 211-residue protein sequence, read N- to C-terminus: Probable GTP-binding protein EngB (211 aa).

Residues 22-195 form the EngB-type G domain; the sequence is PFPEVAFAGK…WQLIDSYVLP (174 aa). GTP is bound by residues 30–37, 57–61, 75–78, 142–145, and 174–176; these read GKSNVGKS, GKTQT, DLPG, TKLD, and FSS. Positions 37 and 59 each coordinate Mg(2+).

The protein belongs to the TRAFAC class TrmE-Era-EngA-EngB-Septin-like GTPase superfamily. EngB GTPase family. Mg(2+) serves as cofactor.

Its function is as follows. Necessary for normal cell division and for the maintenance of normal septation. The polypeptide is Probable GTP-binding protein EngB (Lachnospira eligens (strain ATCC 27750 / DSM 3376 / VPI C15-48 / C15-B4) (Eubacterium eligens)).